Here is a 342-residue protein sequence, read N- to C-terminus: GTPase Obg (342 aa).

In terms of domain architecture, Obg spans 1-159; it reads MKFIDEAKIY…RWIRLELKLL (159 aa). Residues 160-332 form the OBG-type G domain; the sequence is ADVGIIGLPN…LLYKIGEALK (173 aa). GTP contacts are provided by residues 166-173, 191-195, 214-217, 284-287, and 313-315; these read GLPNVGKS, FTTLT, DIPG, NKTD, and SAA. Mg(2+)-binding residues include S173 and T193.

The protein belongs to the TRAFAC class OBG-HflX-like GTPase superfamily. OBG GTPase family. Monomer. Requires Mg(2+) as cofactor.

Its subcellular location is the cytoplasm. In terms of biological role, an essential GTPase which binds GTP, GDP and possibly (p)ppGpp with moderate affinity, with high nucleotide exchange rates and a fairly low GTP hydrolysis rate. Plays a role in control of the cell cycle, stress response, ribosome biogenesis and in those bacteria that undergo differentiation, in morphogenesis control. This chain is GTPase Obg, found in Syntrophus aciditrophicus (strain SB).